The chain runs to 179 residues: CDP-archaeol synthase (179 aa).

The next 4 membrane-spanning stretches (helical) occupy residues 53 to 73 (FVGGVAGGVLTANLQYAIEKL), 88 to 108 (FTLTFLLAFGAMFGDLCGSFI), 120 to 140 (FLIVDQLMFLLVALLIASLYP), and 145 to 165 (LFTAEIIALAVIITPALHMGI).

It belongs to the CDP-archaeol synthase family. Mg(2+) is required as a cofactor.

It localises to the cell membrane. It carries out the reaction 2,3-bis-O-(geranylgeranyl)-sn-glycerol 1-phosphate + CTP + H(+) = CDP-2,3-bis-O-(geranylgeranyl)-sn-glycerol + diphosphate. It functions in the pathway membrane lipid metabolism; glycerophospholipid metabolism. Catalyzes the formation of CDP-2,3-bis-(O-geranylgeranyl)-sn-glycerol (CDP-archaeol) from 2,3-bis-(O-geranylgeranyl)-sn-glycerol 1-phosphate (DGGGP) and CTP. This reaction is the third ether-bond-formation step in the biosynthesis of archaeal membrane lipids. Can use CTP or dCTP, but not ATP, GTP or TTP. The chain is CDP-archaeol synthase from Archaeoglobus fulgidus (strain ATCC 49558 / DSM 4304 / JCM 9628 / NBRC 100126 / VC-16).